Here is a 246-residue protein sequence, read N- to C-terminus: Small ribosomal subunit protein uS2 (246 aa).

This sequence belongs to the universal ribosomal protein uS2 family.

In Pseudomonas aeruginosa (strain LESB58), this protein is Small ribosomal subunit protein uS2.